A 396-amino-acid chain; its full sequence is 3-amino-4-hydroxybenzoate 2-monooxygenase PtnB3 (396 aa).

Residues Ala19, 38-39, and Arg112 each bind FAD; that span reads EQ. Tyr217 (proton acceptor) is an active-site residue. FAD is bound at residue Asp295.

This sequence belongs to the 6-hydroxynicotinate 3-monooxygenase family. FAD is required as a cofactor.

It carries out the reaction 3-amino-4-hydroxybenzoate + NADPH + O2 + H(+) = 3-amino-2,4-dihydroxybenzoate + NADP(+) + H2O. Its pathway is antibiotic biosynthesis. Part of a gene cluster involved in the biosynthesis of thioplatencin (ThioPTN) and platencin (PTN), potent and selective inhibitors of bacterial and mammalian fatty acid synthases. Catalyzes the hydroxylation of 3-amino-4-hydroxybenzoate (3,4-AHBA) to 3-amino-2,4-dihydroxybenzoate (3,2,4-ADHBA). The sequence is that of 3-amino-4-hydroxybenzoate 2-monooxygenase PtnB3 from Streptomyces platensis.